The following is a 295-amino-acid chain: WHI2-like protein P4H10.16c (295 aa).

The protein belongs to the WHI2 family.

The protein resides in the cytoplasm. The protein localises to the nucleus. The chain is WHI2-like protein P4H10.16c from Schizosaccharomyces pombe (strain 972 / ATCC 24843) (Fission yeast).